The following is a 578-amino-acid chain: Membrane protein insertase YidC (578 aa).

Residues 3–23 (IQRSILIVALAVVSYLLVLQW) traverse the membrane as a helical segment. Residues 34-72 (AASASMNTTQGLPDTPSASGTSSDVPTAQSSAAGSEAAD) are disordered. A compositionally biased stretch (polar residues) spans 37–66 (ASMNTTQGLPDTPSASGTSSDVPTAQSSAA). Helical transmembrane passes span 361-381 (LELT…FWLL), 387-407 (LIGN…LAFF), 457-477 (LGGC…YWVL), 500-520 (PFFI…MLNP), and 535-555 (PIIF…YWVV).

Belongs to the OXA1/ALB3/YidC family. Type 1 subfamily. As to quaternary structure, interacts with the Sec translocase complex via SecD. Specifically interacts with transmembrane segments of nascent integral membrane proteins during membrane integration.

The protein localises to the cell inner membrane. Its function is as follows. Required for the insertion and/or proper folding and/or complex formation of integral membrane proteins into the membrane. Involved in integration of membrane proteins that insert both dependently and independently of the Sec translocase complex, as well as at least some lipoproteins. Aids folding of multispanning membrane proteins. The protein is Membrane protein insertase YidC of Pseudomonas aeruginosa (strain LESB58).